The chain runs to 147 residues: Hemoglobin subunit beta (147 aa).

One can recognise a Globin domain in the interval 3-147; sequence HWSCEEKQFI…VAHALALGYH (145 aa). 2 residues coordinate heme b: H64 and H93.

Belongs to the globin family. As to quaternary structure, heterotetramer of two alpha-D chains and two beta chains. Red blood cells.

Functionally, involved in oxygen transport from the lung to the various peripheral tissues. The polypeptide is Hemoglobin subunit beta (HBB) (Chelonoidis carbonarius (Red-footed tortoise)).